Reading from the N-terminus, the 426-residue chain is Histidine--tRNA ligase (426 aa).

Belongs to the class-II aminoacyl-tRNA synthetase family. Homodimer.

The protein localises to the cytoplasm. It catalyses the reaction tRNA(His) + L-histidine + ATP = L-histidyl-tRNA(His) + AMP + diphosphate + H(+). The chain is Histidine--tRNA ligase from Corynebacterium kroppenstedtii (strain DSM 44385 / JCM 11950 / CIP 105744 / CCUG 35717).